The chain runs to 349 residues: Interferon-stimulated 20 kDa exonuclease-like 2 (349 aa).

Disordered stretches follow at residues 1-100 and 126-166; these read MSTL…AAVP and ALPK…KYSG. Basic and acidic residues predominate over residues 14–23; it reads PPKKALEGNA. The segment covering 24–47 has biased composition (basic residues); sequence KHRKFVKKRRLLERKGFLNKKKQP. Positions 54–66 are enriched in basic and acidic residues; that stretch reads LHSEPSQKGETPR. Residues 70-87 show a composition bias toward low complexity; it reads TWKATPLPKKKTTAASSS. Residues 130-142 are compositionally biased toward basic residues; the sequence is IKSHPTRPQKKGS. The Exonuclease domain maps to 175 to 331; the sequence is MVAIDCEMVG…EDAQATMELY (157 aa).

Its subcellular location is the nucleus. It localises to the nucleolus. 3'-&gt; 5'-exoribonuclease involved in ribosome biogenesis in the processing of the 12S pre-rRNA. Displays a strong specificity for a 3'-end containing a free hydroxyl group. In Bos taurus (Bovine), this protein is Interferon-stimulated 20 kDa exonuclease-like 2 (ISG20L2).